Reading from the N-terminus, the 2128-residue chain is Non-reducing polyketide synthase albA (2128 aa).

The interval 8–244 is N-terminal acylcarrier protein transacylase domain (SAT); the sequence is YLFGDQTSDI…VKAPIHGPYH (237 aa). A Ketosynthase family 3 (KS3) domain is found at 375–806; it reads NSKIAIIGMS…GGNTALLLED (432 aa). Residues Cys-547, His-682, and His-724 each act as for beta-ketoacyl synthase activity in the active site. The tract at residues 912 to 1232 is malonyl-CoA:ACP transacylase (MAT) domain; sequence FVFTGQGAQY…LASLHLAGID (321 aa). Ser-1001 acts as the For acyl/malonyl transferase activity in catalysis. The segment at 1286–1425 is N-terminal hotdog fold; sequence HEYLTTAAQK…CTVRFFDCAA (140 aa). One can recognise a PKS/mFAS DH domain in the interval 1286–1598; the sequence is HEYLTTAAQK…FQALSRKILD (313 aa). The segment at 1290-1603 is product template (PT) domain; the sequence is TTAAQKVIET…RKILDTVLPP (314 aa). The Proton acceptor; for dehydratase activity role is filled by His-1326. The segment at 1452-1598 is C-terminal hotdog fold; that stretch reads DAHRLGRGMV…FQALSRKILD (147 aa). Catalysis depends on Asp-1511, which acts as the Proton donor; for dehydratase activity. In terms of domain architecture, Carrier 1 spans 1618–1695; sequence PSAPSLVKRA…DFKQFLAPMS (78 aa). Position 1655 is an O-(pantetheine 4'-phosphoryl)serine (Ser-1655). Residues 1695–1740 form a disordered region; that stretch reads SQGEASDGSTSDPESSSSFNGGSSTDESSAGSPVSSPPNEKVTQVE. Low complexity predominate over residues 1700 to 1723; sequence SDGSTSDPESSSSFNGGSSTDESS. The segment covering 1724 to 1740 has biased composition (polar residues); that stretch reads AGSPVSSPPNEKVTQVE. The Carrier 2 domain maps to 1739–1816; the sequence is VEQHATIKEI…DVEDALGLKP (78 aa). Ser-1776 is modified (O-(pantetheine 4'-phosphoryl)serine). The claisen cyclase domain stretch occupies residues 1854–2126; it reads SPHPRSTSIL…ELGSFIGNAM (273 aa). Ser-1944 acts as the For Claisen cyclase activity in catalysis.

It catalyses the reaction 6 malonyl-CoA + acetyl-CoA + 6 H(+) = naphtopyrone YWA1 + 6 CO2 + 7 CoA + H2O. It participates in secondary metabolite biosynthesis. Functionally, non-reducing polyketide synthase; part of the gene cluster that mediates the biosynthesis of aurasperone B, a dimeric gamma-naphthopyrone. The first step in the biosynthesis of aurasperone B is the production of gamma-naphthopyrone precursor YWA1 by the non-reducing polyketide synthase albA, via condensation of one acetyl-CoA starter unit with 6 malonyl-CoA units. YWA1 is then methylated by aunE at position C-6 to yield foncesin which is further methylated at position C-8 by aunD to produce fonsecin B. A key enzyme in the biosynthetic pathway is the cytochrome P450 monooxygenase aunB which catalyzes the oxidative dimerization of fonsecin B to aurasperone B. AunB also catalyzes the oxidative dimerization of rubrofusarin B into aurasperone A. This Aspergillus niger (strain ATCC 1015 / CBS 113.46 / FGSC A1144 / LSHB Ac4 / NCTC 3858a / NRRL 328 / USDA 3528.7) protein is Non-reducing polyketide synthase albA.